A 497-amino-acid chain; its full sequence is Glycerol kinase (497 aa).

ADP is bound at residue T11. 3 residues coordinate ATP: T11, T12, and S13. T11 contributes to the sn-glycerol 3-phosphate binding site. Residue R15 participates in ADP binding. Positions 81, 82, 134, and 244 each coordinate sn-glycerol 3-phosphate. Glycerol-binding residues include R81, E82, Y134, D244, and Q245. ADP-binding residues include T266 and G309. Positions 266, 309, 313, and 410 each coordinate ATP. G410 and N414 together coordinate ADP.

Belongs to the FGGY kinase family.

It catalyses the reaction glycerol + ATP = sn-glycerol 3-phosphate + ADP + H(+). The protein operates within polyol metabolism; glycerol degradation via glycerol kinase pathway; sn-glycerol 3-phosphate from glycerol: step 1/1. Its activity is regulated as follows. Inhibited by fructose 1,6-bisphosphate (FBP). Key enzyme in the regulation of glycerol uptake and metabolism. Catalyzes the phosphorylation of glycerol to yield sn-glycerol 3-phosphate. The protein is Glycerol kinase of Fusobacterium nucleatum subsp. nucleatum (strain ATCC 25586 / DSM 15643 / BCRC 10681 / CIP 101130 / JCM 8532 / KCTC 2640 / LMG 13131 / VPI 4355).